Here is a 701-residue protein sequence, read N- to C-terminus: Polyribonucleotide nucleotidyltransferase (701 aa).

Aspartate 487 and aspartate 493 together coordinate Mg(2+). One can recognise a KH domain in the interval 554–613 (PTMIAMKIDTDKIRDVIGKGGATIRAICEETKASIDIEDDGSIKIFGESKEAAEAARQRV). The region spanning 623–691 (GKIYIGKVER…NRGRIKLSIK (69 aa)) is the S1 motif domain.

The protein belongs to the polyribonucleotide nucleotidyltransferase family. In terms of assembly, component of the RNA degradosome, which is a multiprotein complex involved in RNA processing and mRNA degradation. The cofactor is Mg(2+).

It localises to the cytoplasm. It carries out the reaction RNA(n+1) + phosphate = RNA(n) + a ribonucleoside 5'-diphosphate. Involved in mRNA degradation. Catalyzes the phosphorolysis of single-stranded polyribonucleotides processively in the 3'- to 5'-direction. The sequence is that of Polyribonucleotide nucleotidyltransferase from Pseudomonas syringae pv. syringae (strain B728a).